Reading from the N-terminus, the 274-residue chain is UPF0758 protein RHE_CH01848 (274 aa).

A disordered region spans residues 1–37 (MAKGPVATSSDDELPFETEEPVADERSFFGGRPQKPA). Positions 10–22 (SDDELPFETEEPV) are enriched in acidic residues. An MPN domain is found at 152–274 (VLSSWSSVIQ…HVSLKGLKLI (123 aa)). Residues His223, His225, and Asp236 each coordinate Zn(2+). Residues 223–236 (HNHPSGDPTPSRAD) carry the JAMM motif motif.

Belongs to the UPF0758 family.

This Rhizobium etli (strain ATCC 51251 / DSM 11541 / JCM 21823 / NBRC 15573 / CFN 42) protein is UPF0758 protein RHE_CH01848.